Consider the following 481-residue polypeptide: ATP synthase subunit beta (481 aa).

167–174 (GGAGVGKT) contributes to the ATP binding site.

The protein belongs to the ATPase alpha/beta chains family. In terms of assembly, F-type ATPases have 2 components, CF(1) - the catalytic core - and CF(0) - the membrane proton channel. CF(1) has five subunits: alpha(3), beta(3), gamma(1), delta(1), epsilon(1). CF(0) has three main subunits: a(1), b(2) and c(9-12). The alpha and beta chains form an alternating ring which encloses part of the gamma chain. CF(1) is attached to CF(0) by a central stalk formed by the gamma and epsilon chains, while a peripheral stalk is formed by the delta and b chains.

It localises to the cell membrane. It catalyses the reaction ATP + H2O + 4 H(+)(in) = ADP + phosphate + 5 H(+)(out). Functionally, produces ATP from ADP in the presence of a proton gradient across the membrane. The catalytic sites are hosted primarily by the beta subunits. The sequence is that of ATP synthase subunit beta from Corynebacterium jeikeium (strain K411).